The primary structure comprises 511 residues: Glucans biosynthesis protein G (511 aa).

The signal sequence occupies residues 1–22 (MMKMRWLSAAVMLTLYTSSSWA).

It belongs to the OpgD/OpgG family.

It localises to the periplasm. It participates in glycan metabolism; osmoregulated periplasmic glucan (OPG) biosynthesis. In terms of biological role, involved in the biosynthesis of osmoregulated periplasmic glucans (OPGs). The sequence is that of Glucans biosynthesis protein G from Shigella dysenteriae serotype 1 (strain Sd197).